The chain runs to 154 residues: Urease accessory protein UreE (154 aa).

This sequence belongs to the UreE family.

The protein localises to the cytoplasm. Its function is as follows. Involved in urease metallocenter assembly. Binds nickel. Probably functions as a nickel donor during metallocenter assembly. The protein is Urease accessory protein UreE of Prochlorococcus marinus subsp. pastoris (strain CCMP1986 / NIES-2087 / MED4).